The following is a 197-amino-acid chain: Xanthine phosphoribosyltransferase (197 aa).

Positions 20 and 27 each coordinate xanthine. 128–132 (ANGQA) is a 5-phospho-alpha-D-ribose 1-diphosphate binding site. K156 is a binding site for xanthine.

The protein belongs to the purine/pyrimidine phosphoribosyltransferase family. Xpt subfamily. In terms of assembly, homodimer.

It is found in the cytoplasm. It catalyses the reaction XMP + diphosphate = xanthine + 5-phospho-alpha-D-ribose 1-diphosphate. The protein operates within purine metabolism; XMP biosynthesis via salvage pathway; XMP from xanthine: step 1/1. Converts the preformed base xanthine, a product of nucleic acid breakdown, to xanthosine 5'-monophosphate (XMP), so it can be reused for RNA or DNA synthesis. This Lactococcus lactis subsp. lactis (strain IL1403) (Streptococcus lactis) protein is Xanthine phosphoribosyltransferase.